The chain runs to 120 residues: Small ribosomal subunit protein uS13 (120 aa).

The tract at residues 94–120 is disordered; the sequence is GLPLRGQRTRTNARTRKGPRKAIAGKK.

The protein belongs to the universal ribosomal protein uS13 family. In terms of assembly, part of the 30S ribosomal subunit. Forms a loose heterodimer with protein S19. Forms two bridges to the 50S subunit in the 70S ribosome.

Located at the top of the head of the 30S subunit, it contacts several helices of the 16S rRNA. In the 70S ribosome it contacts the 23S rRNA (bridge B1a) and protein L5 of the 50S subunit (bridge B1b), connecting the 2 subunits; these bridges are implicated in subunit movement. Contacts the tRNAs in the A and P-sites. This is Small ribosomal subunit protein uS13 from Azoarcus sp. (strain BH72).